Here is a 372-residue protein sequence, read N- to C-terminus: F-box protein AFR (372 aa).

Residues Met-1–Asp-15 show a composition bias toward polar residues. The segment at Met-1–Pro-27 is disordered. The 46-residue stretch at Ile-29 to Ser-74 folds into the F-box domain. Kelch repeat units follow at residues Pro-80–Ser-126, Lys-135–Gly-178, Lys-179–Lys-227, Met-229–Arg-276, and Val-279–Phe-325.

As to quaternary structure, part of a SCF (ASK-cullin-F-box) protein ligase complex. Interacts with SKP1A.

Its pathway is protein modification; protein ubiquitination. Its function is as follows. Component of SCF (ASK-cullin-F-box) E3 ubiquitin ligase complexes, which may mediate the ubiquitination and subsequent proteasomal degradation of target proteins. Part of the phyA-mediated signaling transduction pathway leading to the regulation of gene expression and hypocotyls elongation in response to red and far-red light exposure. This chain is F-box protein AFR (AFR), found in Arabidopsis thaliana (Mouse-ear cress).